Reading from the N-terminus, the 274-residue chain is Tryptophan synthase alpha chain (274 aa).

Active-site proton acceptor residues include Glu-49 and Asp-60.

This sequence belongs to the TrpA family. Tetramer of two alpha and two beta chains.

It carries out the reaction (1S,2R)-1-C-(indol-3-yl)glycerol 3-phosphate + L-serine = D-glyceraldehyde 3-phosphate + L-tryptophan + H2O. It participates in amino-acid biosynthesis; L-tryptophan biosynthesis; L-tryptophan from chorismate: step 5/5. Functionally, the alpha subunit is responsible for the aldol cleavage of indoleglycerol phosphate to indole and glyceraldehyde 3-phosphate. The chain is Tryptophan synthase alpha chain from Alkalilimnicola ehrlichii (strain ATCC BAA-1101 / DSM 17681 / MLHE-1).